We begin with the raw amino-acid sequence, 334 residues long: Thiamine thiazole synthase (334 aa).

Substrate-binding positions include cysteine 86, 107–108 (EA), glycine 115, and valine 183. Cysteine 221 is subject to 2,3-didehydroalanine (Cys). Substrate-binding positions include aspartate 223, histidine 238, methionine 290, and 300 to 302 (RMG).

Belongs to the THI4 family. In terms of assembly, homooctamer. Requires Fe cation as cofactor. In terms of processing, during the catalytic reaction, a sulfide is transferred from Cys-221 to a reaction intermediate, generating a dehydroalanine residue.

Its subcellular location is the cytoplasm. The protein resides in the nucleus. The catalysed reaction is [ADP-thiazole synthase]-L-cysteine + glycine + NAD(+) = [ADP-thiazole synthase]-dehydroalanine + ADP-5-ethyl-4-methylthiazole-2-carboxylate + nicotinamide + 3 H2O + 2 H(+). Involved in biosynthesis of the thiamine precursor thiazole. Catalyzes the conversion of NAD and glycine to adenosine diphosphate 5-(2-hydroxyethyl)-4-methylthiazole-2-carboxylic acid (ADT), an adenylated thiazole intermediate. The reaction includes an iron-dependent sulfide transfer from a conserved cysteine residue of the protein to a thiazole intermediate. The enzyme can only undergo a single turnover, which suggests it is a suicide enzyme. May have additional roles in adaptation to various stress conditions and in DNA damage tolerance. The chain is Thiamine thiazole synthase from Ajellomyces capsulatus (strain G186AR / H82 / ATCC MYA-2454 / RMSCC 2432) (Darling's disease fungus).